The primary structure comprises 100 residues: Aspartyl/glutamyl-tRNA(Asn/Gln) amidotransferase subunit C (100 aa).

Belongs to the GatC family. Heterotrimer of A, B and C subunits.

The catalysed reaction is L-glutamyl-tRNA(Gln) + L-glutamine + ATP + H2O = L-glutaminyl-tRNA(Gln) + L-glutamate + ADP + phosphate + H(+). It carries out the reaction L-aspartyl-tRNA(Asn) + L-glutamine + ATP + H2O = L-asparaginyl-tRNA(Asn) + L-glutamate + ADP + phosphate + 2 H(+). In terms of biological role, allows the formation of correctly charged Asn-tRNA(Asn) or Gln-tRNA(Gln) through the transamidation of misacylated Asp-tRNA(Asn) or Glu-tRNA(Gln) in organisms which lack either or both of asparaginyl-tRNA or glutaminyl-tRNA synthetases. The reaction takes place in the presence of glutamine and ATP through an activated phospho-Asp-tRNA(Asn) or phospho-Glu-tRNA(Gln). The sequence is that of Aspartyl/glutamyl-tRNA(Asn/Gln) amidotransferase subunit C from Rickettsia bellii (strain OSU 85-389).